The chain runs to 602 residues: Protein nessun dorma (602 aa).

A coiled-coil region spans residues 188 to 208; the sequence is AEAKYIQQRLDYLELDLSDAE.

In terms of assembly, interacts (via N-terminus) with both members of the centralspindlin complex, Pav and Tum. Detected in testis (at protein level). Also expressed in ovary.

The protein localises to the midbody. Its function is as follows. Required during male meiosis for completion of spermatocyte cytokinesis and possibly also required in female germline cells. Also involved in ring canal formation in male and female germline cells. Not essential for cleavage furrow ingression but is required for contractile ring stability and the attachment of the furrowing membrane to the actomyosin ring in late telophase. Displays high binding affinity for beta-galactosides. The chain is Protein nessun dorma from Drosophila melanogaster (Fruit fly).